We begin with the raw amino-acid sequence, 436 residues long: UDP-N-acetylglucosamine 1-carboxyvinyltransferase 1 (436 aa).

22 to 23 (KN) lines the phosphoenolpyruvate pocket. Arg93 lines the UDP-N-acetyl-alpha-D-glucosamine pocket. Cys117 serves as the catalytic Proton donor. Cys117 carries the 2-(S-cysteinyl)pyruvic acid O-phosphothioketal modification. UDP-N-acetyl-alpha-D-glucosamine contacts are provided by residues 122–126 (RPIDQ), Asp306, and Val328.

The protein belongs to the EPSP synthase family. MurA subfamily.

It is found in the cytoplasm. It carries out the reaction phosphoenolpyruvate + UDP-N-acetyl-alpha-D-glucosamine = UDP-N-acetyl-3-O-(1-carboxyvinyl)-alpha-D-glucosamine + phosphate. Its pathway is cell wall biogenesis; peptidoglycan biosynthesis. In terms of biological role, cell wall formation. Adds enolpyruvyl to UDP-N-acetylglucosamine. This chain is UDP-N-acetylglucosamine 1-carboxyvinyltransferase 1, found in Bacillus licheniformis (strain ATCC 14580 / DSM 13 / JCM 2505 / CCUG 7422 / NBRC 12200 / NCIMB 9375 / NCTC 10341 / NRRL NRS-1264 / Gibson 46).